The primary structure comprises 106 residues: Small cardioactive peptide-related peptide (106 aa).

A signal peptide spans 1–20 (MFCKHLSFVAITICFLLVLA). Positions 21–41 (KTENEIQQKNIKFDQRTWRNM) are cleaved as a propeptide — amino-terminal spacer peptide. Q52 is subject to Glutamine amide. The propeptide at 55 to 106 (SDNQPDYTCCGMPLTKYVGICPIGMECCPGLKKVLQKSGQRTIYSVCVADAY) is carboxy-terminal spacer peptide.

Expression is seen in the peripheral and central nervous systems in tissues such as the brain, the inferior buccal ganglion, the gastric ganglion, the olfactory lobe, the peduncle lobe and the optic lobe. Expression in the brain is distributed in the median inferior frontal lobe, the superior buccal lobe, the prebranchial lobe and the pedal lobe. Not expressed in the vasomotor lobe or the palliovisceral lobe that controls the cardiac system.

Its subcellular location is the secreted. In terms of biological role, evokes contractions in the radula protractor muscle, and may regulate feeding behavior and gut motility by controlling muscle contraction of the buccal mass. This Octopus vulgaris (Common octopus) protein is Small cardioactive peptide-related peptide.